A 110-amino-acid polypeptide reads, in one-letter code: Thiosulfate sulfurtransferase GlpE (110 aa).

The region spanning 17 to 105 (HQGKAVLVDI…WHRHFPAEVE (89 aa)) is the Rhodanese domain. The active-site Cysteine persulfide intermediate is Cys65.

The protein belongs to the GlpE family.

Its subcellular location is the cytoplasm. It catalyses the reaction thiosulfate + hydrogen cyanide = thiocyanate + sulfite + 2 H(+). It carries out the reaction thiosulfate + [thioredoxin]-dithiol = [thioredoxin]-disulfide + hydrogen sulfide + sulfite + 2 H(+). Its function is as follows. Transferase that catalyzes the transfer of sulfur from thiosulfate to thiophilic acceptors such as cyanide or dithiols. May function in a CysM-independent thiosulfate assimilation pathway by catalyzing the conversion of thiosulfate to sulfite, which can then be used for L-cysteine biosynthesis. This is Thiosulfate sulfurtransferase GlpE from Enterobacter sp. (strain 638).